Here is a 397-residue protein sequence, read N- to C-terminus: Urea transporter 2 (397 aa).

Transmembrane regions (helical) follow at residues 68–85 (VMFV…IGLF), 92–109 (AIAG…ALIL), 115–135 (AIAS…IAVF), 143–163 (WWLL…SSAL), and 172–192 (LPVF…ATGH). N-linked (GlcNAc...) asparagine glycosylation occurs at asparagine 210. The next 5 helical transmembrane spans lie at 239–257 (WTGG…LICL), 264–280 (TMGM…FDSI), 287–303 (FNST…FYVI), 309–329 (LLAV…TNVL), and 331–351 (VFGL…FLLL).

Belongs to the urea transporter family. In terms of tissue distribution, kidney.

Its subcellular location is the apical cell membrane. The protein localises to the basolateral cell membrane. The enzyme catalyses urea(in) = urea(out). Its activity is regulated as follows. Inhibited by urea analogs and phloretin. Its function is as follows. Mediates the transport of urea driven by a concentration gradient across the cell membrane of the renal inner medullary collecting duct which is critical to the urinary concentrating mechanism. This chain is Urea transporter 2 (SLC14A2), found in Oryctolagus cuniculus (Rabbit).